We begin with the raw amino-acid sequence, 954 residues long: Valine--tRNA ligase (954 aa).

A 'HIGH' region motif is present at residues 48–58; the sequence is PNVTGSLHMGH. A 'KMSKS' region motif is present at residues 560–564; that stretch reads KMSKS. Lys-563 is an ATP binding site. Positions 883-954 form a coiled coil; it reads AGFINKEAEL…QTQYQAIENL (72 aa).

It belongs to the class-I aminoacyl-tRNA synthetase family. ValS type 1 subfamily. Monomer.

Its subcellular location is the cytoplasm. The enzyme catalyses tRNA(Val) + L-valine + ATP = L-valyl-tRNA(Val) + AMP + diphosphate. Catalyzes the attachment of valine to tRNA(Val). As ValRS can inadvertently accommodate and process structurally similar amino acids such as threonine, to avoid such errors, it has a 'posttransfer' editing activity that hydrolyzes mischarged Thr-tRNA(Val) in a tRNA-dependent manner. The sequence is that of Valine--tRNA ligase from Actinobacillus pleuropneumoniae serotype 5b (strain L20).